The primary structure comprises 541 residues: Chaperonin GroEL 2 (541 aa).

Residues 29-32 (TLGP), 86-90 (DGTTT), G413, 478-480 (NAA), and D494 each bind ATP.

Belongs to the chaperonin (HSP60) family. In terms of assembly, forms a cylinder of 14 subunits composed of two heptameric rings stacked back-to-back. Interacts with the co-chaperonin GroES.

Its subcellular location is the cytoplasm. It carries out the reaction ATP + H2O + a folded polypeptide = ADP + phosphate + an unfolded polypeptide.. Together with its co-chaperonin GroES, plays an essential role in assisting protein folding. The GroEL-GroES system forms a nano-cage that allows encapsulation of the non-native substrate proteins and provides a physical environment optimized to promote and accelerate protein folding. This Corynebacterium jeikeium (strain K411) protein is Chaperonin GroEL 2.